The primary structure comprises 284 residues: 2-dehydro-3-deoxyphosphooctonate aldolase (284 aa).

Belongs to the KdsA family.

The protein resides in the cytoplasm. The enzyme catalyses D-arabinose 5-phosphate + phosphoenolpyruvate + H2O = 3-deoxy-alpha-D-manno-2-octulosonate-8-phosphate + phosphate. Its pathway is carbohydrate biosynthesis; 3-deoxy-D-manno-octulosonate biosynthesis; 3-deoxy-D-manno-octulosonate from D-ribulose 5-phosphate: step 2/3. The protein operates within bacterial outer membrane biogenesis; lipopolysaccharide biosynthesis. This Proteus mirabilis (strain HI4320) protein is 2-dehydro-3-deoxyphosphooctonate aldolase.